The following is a 296-amino-acid chain: Elongation factor Ts (296 aa).

Residues 82 to 85 (TDFV) form an involved in Mg(2+) ion dislocation from EF-Tu region.

The protein belongs to the EF-Ts family.

The protein localises to the cytoplasm. In terms of biological role, associates with the EF-Tu.GDP complex and induces the exchange of GDP to GTP. It remains bound to the aminoacyl-tRNA.EF-Tu.GTP complex up to the GTP hydrolysis stage on the ribosome. This chain is Elongation factor Ts, found in Aromatoleum aromaticum (strain DSM 19018 / LMG 30748 / EbN1) (Azoarcus sp. (strain EbN1)).